Consider the following 386-residue polypeptide: Threonine--tRNA ligase editing subunit (386 aa).

Belongs to the class-II aminoacyl-tRNA synthetase family. Archaea-specific ThrRS editing domain subfamily. In terms of assembly, probably interacts with its catalytic subunit (AC Q97VW8); a subunit fusion (in the order edit-catalytic) is fully functional.

The protein resides in the cytoplasm. In terms of biological role, freestanding tRNA editing subunit of threonine--tRNA ligase, the catalytic subunit is AC Q97VW8. Deacylates (edits) mischarged L-seryl-tRNA(Thr) in trans, removing L-serine, has no aminoacylation activity. In vitro when both subunits are present, or if the 2 subunits are fused, L-seryl-tRNA(Thr) is no longer produced. Has no activity on correctly acylated L-seryl-tRNA(Ser) or L-threonyl-tRNA(Thr). Editing is probably catalyzed by the 2'-OH of A76 of tRNA(Thr). In Saccharolobus solfataricus (strain ATCC 35092 / DSM 1617 / JCM 11322 / P2) (Sulfolobus solfataricus), this protein is Threonine--tRNA ligase editing subunit.